A 225-amino-acid chain; its full sequence is Protein YIP4 (225 aa).

2 positions are modified to phosphoserine: serine 27 and serine 28. 5 consecutive transmembrane segments (helical) span residues 91 to 111 (WDLWGPLIFSLVIALALALST), 118 to 138 (SVFTVVVALIWFGEAVCSLNI), 154 to 176 (LGYSSFPLMIASIVCAFVPLIFI), 180 to 199 (VIVAMYAWTLFAAMGVLQNS), and 205 to 225 (KLLAVYPLFLFYFSLAWIIFL).

Belongs to the YIP1 family. As to quaternary structure, interacts with the YIP1 family members yip1 and yip5, and with several Rab GTPases.

It is found in the membrane. Its function is as follows. May be involved in proper membrane localization of Rab GTPases. The chain is Protein YIP4 from Schizosaccharomyces pombe (strain 972 / ATCC 24843) (Fission yeast).